Reading from the N-terminus, the 643-residue chain is Transmembrane 9 superfamily member 4 (643 aa).

Positions 1–23 are cleaved as a signal peptide; it reads MAAAMIWWPRFLLLLCLTCKGST. Residues 24-282 lie on the Extracellular side of the membrane; that stretch reads FYVPGVAPIN…TMSDVQIHWF (259 aa). A helical membrane pass occupies residues 283-303; sequence SIINSVVVVFFLSGILSMIII. The Cytoplasmic segment spans residues 304–347; the sequence is RTLRKDIANYNKEDDIEDTMEESGWKLVHGDVFRPPQYPMILSS. Residue Y313 is modified to Phosphotyrosine. Residues 348 to 368 form a helical membrane-spanning segment; the sequence is LLGSGIQLFCMILIVIFVAML. Over 369–377 the chain is Extracellular; that stretch reads GMLSPSSRG. Residues 378 to 398 traverse the membrane as a helical segment; that stretch reads ALMTTACFLFMFMGVFGGFSA. The Cytoplasmic segment spans residues 399 to 417; that stretch reads GRLYRTLKGHRWKKGAFCT. The chain crosses the membrane as a helical span at residues 418-438; sequence ATLYPGVVFGICFVLNCFIWG. The Extracellular portion of the chain corresponds to 439-450; the sequence is KHSSGAVPFPTM. Residues 451–471 form a helical membrane-spanning segment; sequence VALLCMWFGISLPLVYLGYYF. At 472–502 the chain is on the cytoplasmic side; the sequence is GFRKQPYDNPVRTNQIPRQIPEQRWYMNRFV. The helical transmembrane segment at 503–523 threads the bilayer; the sequence is GILMAGILPFGAMFIELFFIF. Residues 524–536 are Extracellular-facing; sequence SAIWENQFYYLFG. A helical transmembrane segment spans residues 537-557; the sequence is FLFLVFIILVVSCSQISIVMV. The Cytoplasmic segment spans residues 558 to 571; the sequence is YFQLCAEDYRWWWR. Residues 572–592 traverse the membrane as a helical segment; sequence NFLVSGGSAFYVLVYAIFYFV. The Extracellular segment spans residues 593–599; it reads NKLDIVE. A helical transmembrane segment spans residues 600–620; it reads FIPSLLYFGYTTLMVLSFWLL. Residues 621–643 are Cytoplasmic-facing; the sequence is TGTIGFYAAYMFVRKIYAAVKID.

It belongs to the nonaspanin (TM9SF) (TC 9.A.2) family.

The protein resides in the membrane. The protein localises to the golgi apparatus. It localises to the early endosome. Associates with proteins harboring glycine-rich transmembrane domains and ensures their efficient localization to the cell surface. The chain is Transmembrane 9 superfamily member 4 (Tm9sf4) from Mus musculus (Mouse).